Here is a 132-residue protein sequence, read N- to C-terminus: Small ribosomal subunit protein uS8 (132 aa).

This sequence belongs to the universal ribosomal protein uS8 family. As to quaternary structure, part of the 30S ribosomal subunit. Contacts proteins S5 and S12.

In terms of biological role, one of the primary rRNA binding proteins, it binds directly to 16S rRNA central domain where it helps coordinate assembly of the platform of the 30S subunit. This Sinorhizobium fredii (strain NBRC 101917 / NGR234) protein is Small ribosomal subunit protein uS8.